A 183-amino-acid chain; its full sequence is Peptide methionine sulfoxide reductase MsrA 1 (183 aa).

Cys12 is a catalytic residue.

The protein belongs to the MsrA Met sulfoxide reductase family.

It carries out the reaction L-methionyl-[protein] + [thioredoxin]-disulfide + H2O = L-methionyl-(S)-S-oxide-[protein] + [thioredoxin]-dithiol. The enzyme catalyses [thioredoxin]-disulfide + L-methionine + H2O = L-methionine (S)-S-oxide + [thioredoxin]-dithiol. Functionally, has an important function as a repair enzyme for proteins that have been inactivated by oxidation. Catalyzes the reversible oxidation-reduction of methionine sulfoxide in proteins to methionine. This Lactococcus lactis subsp. lactis (strain IL1403) (Streptococcus lactis) protein is Peptide methionine sulfoxide reductase MsrA 1 (msrA1).